A 310-amino-acid chain; its full sequence is Upstream stimulatory factor 1 (310 aa).

Residues 1–17 (MKGQQKTAETEEGTVQI) are compositionally biased toward polar residues. Disordered regions lie at residues 1–26 (MKGQ…ATGE) and 171–209 (QGGS…EVER). Positions 190–209 (EAPRTTRDEKRRAQHNEVER) are enriched in basic and acidic residues. In terms of domain architecture, bHLH spans 199 to 254 (KRRAQHNEVERRRRDKINNWIVQLSKIIPDCSMESTKSGQSKGGILSKACDYIQEL). Residues 271–292 (LQLDNDVLRQQVEDLKNKNLLL) form a leucine-zipper region. Residue Lys306 forms a Glycyl lysine isopeptide (Lys-Gly) (interchain with G-Cter in SUMO2) linkage.

As to quaternary structure, efficient DNA binding requires dimerization with another bHLH protein. Binds DNA as a homodimer or a heterodimer (USF1/USF2).

It localises to the nucleus. In terms of biological role, transcription factor that binds to a symmetrical DNA sequence (E-boxes) (5'-CACGTG-3') that is found in a variety of viral and cellular promoters. The chain is Upstream stimulatory factor 1 (USF1) from Bos taurus (Bovine).